Reading from the N-terminus, the 270-residue chain is SAMP-activating enzyme E1 (270 aa).

Residues glycine 42, aspartate 63, 70–74 (SNLQR), and lysine 87 contribute to the ATP site. Residue lysine 113 forms a Glycyl lysine isopeptide (Lys-Gly) (interchain with G-Cter in SAMP2) linkage. 131 to 132 (DN) lines the ATP pocket. The Zn(2+) site is built by cysteine 171 and cysteine 174. Residue cysteine 188 is the Glycyl thioester intermediate of the active site. Positions 245 and 248 each coordinate Zn(2+).

The protein belongs to the HesA/MoeB/ThiF family. In terms of assembly, interacts with NcsA. Zn(2+) is required as a cofactor. Post-translationally, sampylated at Lys-113 with the archaeal ubiquitin-like protein SAMP2. Also sampylated with SAMP1.

The catalysed reaction is [small archaeal modifier protein]-C-terminal Gly-Gly + ATP + H(+) = [small archaeal modifier protein]-C-terminal Gly-Gly-AMP + diphosphate. In terms of biological role, likely activates multiple ubiquitin-like SAMPs for protein conjugation as well as for sulfur transfer, via ATP-dependent adenylation at their C-terminus. In fact, it is required for the formation of all three SAMP1-, SAMP2- and SAMP3-protein conjugates, and for molybdenum cofactor (MoCo) biosynthesis and thiolation of tRNAs. The protein is SAMP-activating enzyme E1 (ubaA) of Haloferax volcanii (strain ATCC 29605 / DSM 3757 / JCM 8879 / NBRC 14742 / NCIMB 2012 / VKM B-1768 / DS2) (Halobacterium volcanii).